Consider the following 427-residue polypeptide: Proteinase-activated receptor 1 (427 aa).

Positions 1-21 (MGPRWLLLWAAGLGLCSPLVS) are cleaved as a signal peptide. The propeptide at 22 to 41 (ARTRGPRPGTDPTNGTLGPR) is removed for receptor activation. The disordered stretch occupies residues 23-87 (RTRGPRPGTD…RSSPPQKSPP (65 aa)). Asn35 is a glycosylation site (N-linked (GlcNAc...) asparagine). The Extracellular segment spans residues 42 to 104 (SFFLRNSNDG…SGYLTSAWLT (63 aa)). The span at 58–68 (PEDEDSSEGEF) shows a compositional bias: acidic residues. N-linked (GlcNAc...) asparagine glycosylation occurs at Asn77. Residues 105-130 (VFIPSVYTGVFLVSLPLNIMAVVVFV) form a helical membrane-spanning segment. The Cytoplasmic segment spans residues 131-139 (LKMKVKKPA). The chain crosses the membrane as a helical span at residues 140–159 (VVYMLHLAAADVLFVCVLPF). Residues 160–178 (KISYYFSGSDWRFGSAMCR) are Extracellular-facing. A disulfide bridge links Cys177 with Cys256. A helical membrane pass occupies residues 179-200 (FVTAAFYGNMYASIMLMTAISV). Topologically, residues 201–220 (DRFLAVVYPIQSLSWRTLGR) are cytoplasmic. Residues 221–241 (ASFICLAIWAMAIAGVAPLLL) traverse the membrane as a helical segment. Topologically, residues 242-270 (QEQATQVPGLNITACHDVLNQTLLEGYYS) are extracellular. Asn252 and Asn261 each carry an N-linked (GlcNAc...) asparagine glycan. The chain crosses the membrane as a helical span at residues 271-290 (YYFSAFSAVFFFVPLTLSTV). The Cytoplasmic portion of the chain corresponds to 291–313 (SYVSIIRCLSSSTVANQNKKSRA). The helical transmembrane segment at 314–336 (LLLSAAVFCIFILCFGPTNILLL) threads the bilayer. The Extracellular portion of the chain corresponds to 337 to 351 (LHYAFLSSDPMTEAA). A helical membrane pass occupies residues 352 to 376 (YFAYLLCVCVSSISCCIDPLIYYYA). Over 377–427 (SSECQRHLFAILHCKESSDPGSCNSSGQLMPSKMDTCSSNLSSSLYKKLLT) the chain is Cytoplasmic. Ser420 carries the phosphoserine modification.

The protein belongs to the G-protein coupled receptor 1 family. Post-translationally, proteolytic cleavage by thrombin generates a new N-terminus that functions as a tethered ligand. Also proteolytically cleaved by cathepsin CTSG. Phosphorylated in the C-terminal tail; probably mediating desensitization prior to the uncoupling and internalization of the receptor.

It is found in the cell membrane. Functionally, high affinity receptor that binds the activated thrombin, leading to calcium release from intracellular stores. The thrombin-activated receptor signaling pathway is mediated through PTX-insensitive G proteins, activation of phospholipase C resulting in the production of 1D-myo-inositol 1,4,5-trisphosphate (InsP3) which binds to InsP3 receptors causing calcium release from the stores. In astrocytes, the calcium released into the cytosol allows the Ca(2+)-dependent release of L-glutamate into the synaptic cleft through BEST1, that targets the neuronal postsynaptic GRIN2A/NMDAR receptor resulting in the synaptic plasticity regulation. May play a role in platelets activation and in vascular development. Mediates up-regulation of pro-inflammatory cytokines, such as MCP-1/CCL2 and IL6, triggered by coagulation factor Xa (F10) in cardiac fibroblasts and umbilical vein endothelial cells. This chain is Proteinase-activated receptor 1, found in Bos taurus (Bovine).